Here is a 73-residue protein sequence, read N- to C-terminus: IVCHTTATSPISAVTCPPGENLCYRKMCDAICSSRGKVVELGCAATCPSKKPYEEVTCCSNDKCNPHPKQRPG.

5 disulfides stabilise this stretch: cysteine 3/cysteine 23, cysteine 16/cysteine 43, cysteine 28/cysteine 32, cysteine 47/cysteine 58, and cysteine 59/cysteine 64.

This sequence belongs to the three-finger toxin family. Long-chain subfamily. Type II alpha-neurotoxin sub-subfamily. As to quaternary structure, monomer in solution, homodimer in crystal state. In terms of tissue distribution, expressed by the venom gland.

The protein localises to the secreted. Its function is as follows. Binds with high affinity to muscular (alpha-1/CHRNA1) and neuronal (alpha-7/CHRNA7) nicotinic acetylcholine receptor (nAChR) and inhibits acetylcholine from binding to the receptor, thereby impairing neuromuscular and neuronal transmission. Mice injected with this toxin develop flaccid paralysis followed by death. Irreversibly inhibits twitches in a concentration-dependent manner in rat phrenic nerve-hemidiaphragm and chick biventer cervicis muscle. The chain is Alpha-bungarotoxin N3 from Bungarus candidus (Malayan krait).